Consider the following 439-residue polypeptide: uncharacterized protein (439 aa).

Disordered stretches follow at residues 1 to 36 (MRPG…SKQA), 126 to 157 (SRTG…GVPI), and 411 to 439 (FRSD…AVPR).

This is an uncharacterized protein from Streptomyces fradiae (Streptomyces roseoflavus).